The primary structure comprises 614 residues: UDP-sugar pyrophosphorylase (614 aa).

Residue A2 is modified to N-acetylalanine.

This sequence belongs to the USP family. Mg(2+) serves as cofactor. Requires Mn(2+) as cofactor. As to expression, ubiquitous, but most abundant in rosette leaves, inflorescences, stems, stamens and pollen.

It catalyses the reaction a monosaccharide 1-phosphate + UTP + H(+) = a UDP-monosaccharide + diphosphate. In terms of biological role, required for the synthesis of the intine, the pectocellulosic inner wall of developing pollen. May function as the terminal enzyme of the myo-inositol oxidation (MIO) pathway. May also play a role in the salvage pathway for synthesis of nucleotide sugars. Can use a wide range of substrates including glucose-1-phosphate, galactose-1-phosphate, xylose-1-phosphate, arabinose-1-phosphate and glucuronate-1-phosphate. This Arabidopsis thaliana (Mouse-ear cress) protein is UDP-sugar pyrophosphorylase (USP).